Reading from the N-terminus, the 406-residue chain is Phosphatidylinositol 5-phosphate 4-kinase type-2 alpha (406 aa).

A2 bears the N-acetylalanine mark. Position 3 is a phosphothreonine (T3). A Phosphoserine modification is found at S14. The region spanning 33 to 405 is the PIPK domain; that stretch reads ASDPLLSVLM…RFLDFIGHIL (373 aa). The segment at 59 to 65 is required for interaction with PIP5K1A; that stretch reads VMLMPDD. Residues K89 and K145 each carry the N6-acetyllysine modification. Positions 288 to 329 are disordered; the sequence is QEEVECEENDGEEEGESDGTHPVGTPPDSPGNTLNSSPPLAP. A compositionally biased stretch (acidic residues) spans 289–304; that stretch reads EEVECEENDGEEEGES.

As to quaternary structure, homodimer. Interacts with PIP4K2B; the interaction may regulate localization to the nucleus. Probably interacts with PIP5K1A; the interaction inhibits PIP5K1A kinase activity. In terms of processing, phosphorylated in tyrosines. Phosphorylation is induced by light and increases kinase activity.

It localises to the cell membrane. It is found in the nucleus. The protein localises to the lysosome. The protein resides in the cytoplasm. Its subcellular location is the photoreceptor inner segment. It localises to the cell projection. It is found in the cilium. The protein localises to the photoreceptor outer segment. It carries out the reaction a 1,2-diacyl-sn-glycero-3-phospho-(1D-myo-inositol-5-phosphate) + ATP = a 1,2-diacyl-sn-glycero-3-phospho-(1D-myo-inositol-4,5-bisphosphate) + ADP + H(+). The enzyme catalyses 1,2-dihexadecanoyl-sn-glycero-3-phospho-(1D-myo-inositol-5-phosphate) + ATP = 1,2-dihexadecanoyl-sn-glycero-3-phospho-(1D-myo-inositol-4,5-bisphosphate) + ADP + H(+). The catalysed reaction is 1,2-dihexadecanoyl-sn-glycero-3-phospho-(1D-myo-inositol-5-phosphate) + GTP = 1,2-dihexadecanoyl-sn-glycero-3-phospho-(1D-myo-inositol-4,5-bisphosphate) + GDP + H(+). In rod outer segments, activated by light. Functionally, catalyzes the phosphorylation of phosphatidylinositol 5-phosphate (PtdIns5P) on the fourth hydroxyl of the myo-inositol ring, to form phosphatidylinositol 4,5-bisphosphate (PtdIns(4,5)P2). Has both ATP- and GTP-dependent kinase activities. May exert its function by regulating the levels of PtdIns5P, which functions in the cytosol by increasing AKT activity and in the nucleus signals through ING2. May regulate the pool of cytosolic PtdIns5P in response to the activation of tyrosine phosphorylation. May be involved in thrombopoiesis, and the terminal maturation of megakaryocytes and regulation of their size. May negatively regulate insulin-stimulated glucose uptake by lowering the levels of PtdIns5P. This is Phosphatidylinositol 5-phosphate 4-kinase type-2 alpha (PIP4K2A) from Sus scrofa (Pig).